An 88-amino-acid polypeptide reads, in one-letter code: Small ribosomal subunit protein bS16c (88 aa).

This sequence belongs to the bacterial ribosomal protein bS16 family.

The protein resides in the plastid. The protein localises to the chloroplast. This chain is Small ribosomal subunit protein bS16c, found in Gossypium hirsutum (Upland cotton).